The chain runs to 83 residues: uncharacterized protein (83 aa).

The interval 40–65 (RMQAGASPDEDNDVNGETSFSRSFGG) is disordered. Residues 54 to 65 (NGETSFSRSFGG) show a composition bias toward polar residues.

This is an uncharacterized protein from Dictyostelium discoideum (Social amoeba).